A 475-amino-acid chain; its full sequence is Putative aldehyde dehydrogenase SH0913 (475 aa).

201–207 (GDGEGVG) is a binding site for NAD(+). Active-site residues include E245 and C279.

The protein belongs to the aldehyde dehydrogenase family.

It catalyses the reaction an aldehyde + NAD(+) + H2O = a carboxylate + NADH + 2 H(+). This Staphylococcus haemolyticus (strain JCSC1435) protein is Putative aldehyde dehydrogenase SH0913.